The primary structure comprises 301 residues: Phosphatidylserine decarboxylase proenzyme (301 aa).

Active-site charge relay system; for autoendoproteolytic cleavage activity residues include aspartate 117, histidine 173, and serine 260. The active-site Schiff-base intermediate with substrate; via pyruvic acid; for decarboxylase activity is the serine 260. Residue serine 260 is modified to Pyruvic acid (Ser); by autocatalysis.

The protein belongs to the phosphatidylserine decarboxylase family. PSD-B subfamily. Prokaryotic type II sub-subfamily. As to quaternary structure, heterodimer of a large membrane-associated beta subunit and a small pyruvoyl-containing alpha subunit. The cofactor is pyruvate. Is synthesized initially as an inactive proenzyme. Formation of the active enzyme involves a self-maturation process in which the active site pyruvoyl group is generated from an internal serine residue via an autocatalytic post-translational modification. Two non-identical subunits are generated from the proenzyme in this reaction, and the pyruvate is formed at the N-terminus of the alpha chain, which is derived from the carboxyl end of the proenzyme. The autoendoproteolytic cleavage occurs by a canonical serine protease mechanism, in which the side chain hydroxyl group of the serine supplies its oxygen atom to form the C-terminus of the beta chain, while the remainder of the serine residue undergoes an oxidative deamination to produce ammonia and the pyruvoyl prosthetic group on the alpha chain. During this reaction, the Ser that is part of the protease active site of the proenzyme becomes the pyruvoyl prosthetic group, which constitutes an essential element of the active site of the mature decarboxylase.

It localises to the cell membrane. It carries out the reaction a 1,2-diacyl-sn-glycero-3-phospho-L-serine + H(+) = a 1,2-diacyl-sn-glycero-3-phosphoethanolamine + CO2. Its pathway is phospholipid metabolism; phosphatidylethanolamine biosynthesis; phosphatidylethanolamine from CDP-diacylglycerol: step 2/2. Its function is as follows. Catalyzes the formation of phosphatidylethanolamine (PtdEtn) from phosphatidylserine (PtdSer). In Chlamydia trachomatis serovar L2 (strain ATCC VR-902B / DSM 19102 / 434/Bu), this protein is Phosphatidylserine decarboxylase proenzyme.